Here is a 285-residue protein sequence, read N- to C-terminus: Polyamine aminopropyltransferase (285 aa).

The PABS domain maps to 5 to 241; the sequence is DNWYIEHFQP…GWWSVTMASK (237 aa). Q35 serves as a coordination point for S-methyl-5'-thioadenosine. The spermidine site is built by H66 and D90. S-methyl-5'-thioadenosine-binding positions include D110 and 141-142; that span reads DG. D160 functions as the Proton acceptor in the catalytic mechanism. 160-163 serves as a coordination point for spermidine; sequence DSTD. P167 is a binding site for S-methyl-5'-thioadenosine.

This sequence belongs to the spermidine/spermine synthase family. In terms of assembly, homodimer or homotetramer.

The protein resides in the cytoplasm. It catalyses the reaction S-adenosyl 3-(methylsulfanyl)propylamine + putrescine = S-methyl-5'-thioadenosine + spermidine + H(+). The protein operates within amine and polyamine biosynthesis; spermidine biosynthesis; spermidine from putrescine: step 1/1. Its function is as follows. Catalyzes the irreversible transfer of a propylamine group from the amino donor S-adenosylmethioninamine (decarboxy-AdoMet) to putrescine (1,4-diaminobutane) to yield spermidine. In Xanthomonas axonopodis pv. citri (strain 306), this protein is Polyamine aminopropyltransferase.